We begin with the raw amino-acid sequence, 320 residues long: Methionyl-tRNA formyltransferase (320 aa).

(6S)-5,6,7,8-tetrahydrofolate is bound at residue 114–117 (SLLP).

The protein belongs to the Fmt family.

It carries out the reaction L-methionyl-tRNA(fMet) + (6R)-10-formyltetrahydrofolate = N-formyl-L-methionyl-tRNA(fMet) + (6S)-5,6,7,8-tetrahydrofolate + H(+). Its function is as follows. Attaches a formyl group to the free amino group of methionyl-tRNA(fMet). The formyl group appears to play a dual role in the initiator identity of N-formylmethionyl-tRNA by promoting its recognition by IF2 and preventing the misappropriation of this tRNA by the elongation apparatus. This Acinetobacter baumannii (strain AB307-0294) protein is Methionyl-tRNA formyltransferase.